The primary structure comprises 109 residues: Putative double-stranded DNA mimic protein YciU (109 aa).

The protein belongs to the putative dsDNA mimic protein family.

In terms of biological role, may act as a double-stranded DNA (dsDNA) mimic. Probably regulates the activity of a dsDNA-binding protein. The protein is Putative double-stranded DNA mimic protein YciU of Salmonella arizonae (strain ATCC BAA-731 / CDC346-86 / RSK2980).